Consider the following 584-residue polypeptide: Gag-Pro polyprotein (584 aa).

The N-myristoyl glycine; by host moiety is linked to residue Gly-2. The interval Glu-95–Ala-116 is disordered. The PTAP/PSAP motif signature appears at Pro-98–Pro-101. The PPXY motif motif lies at Pro-109–Tyr-112. CCHC-type zinc fingers lie at residues Gln-349–Gln-366 and Gly-372–Gln-389. The region spanning Val-457–Ala-535 is the Peptidase A2 domain. Residue Asp-462 is the For protease activity; shared with dimeric partner of the active site.

In terms of assembly, interacts with human TSG101. This interaction is essential for budding and release of viral particles. Specific enzymatic cleavages by the viral protease yield mature proteins. The polyprotein is cleaved during and after budding, this process is termed maturation. The protease is autoproteolytically processed at its N- and C-termini.

It is found in the virion. Matrix protein p19 targets Gag, Gag-Pro and Gag-Pro-Pol polyproteins to the plasma membrane via a multipartite membrane binding signal, that includes its myristoylated N-terminus. Also mediates nuclear localization of the preintegration complex. In terms of biological role, capsid protein p24 forms the conical core of the virus that encapsulates the genomic RNA-nucleocapsid complex. Functionally, nucleocapsid protein p15 is involved in the packaging and encapsidation of two copies of the genome. Its function is as follows. The aspartyl protease mediates proteolytic cleavages of Gag, Gag-Pro and Gag-Pro-Pol polyproteins during or shortly after the release of the virion from the plasma membrane. Cleavages take place as an ordered, step-wise cascade to yield mature proteins. This process is called maturation. Displays maximal activity during the budding process just prior to particle release from the cell. Hydrolyzes host EIF4GI in order to shut off the capped cellular mRNA translation. The resulting inhibition of cellular protein synthesis serves to ensure maximal viral gene expression and to evade host immune response. In Homo sapiens (Human), this protein is Gag-Pro polyprotein (gag-pro).